A 131-amino-acid polypeptide reads, in one-letter code: Small ribosomal subunit protein bS6 (131 aa).

Residues Thr-97 to Glu-131 form a disordered region. A compositionally biased stretch (basic and acidic residues) spans Lys-104 to Ala-114. The span at Glu-115–Glu-131 shows a compositional bias: acidic residues.

Belongs to the bacterial ribosomal protein bS6 family.

Functionally, binds together with bS18 to 16S ribosomal RNA. This chain is Small ribosomal subunit protein bS6, found in Proteus mirabilis (strain HI4320).